Here is a 140-residue protein sequence, read N- to C-terminus: ATP synthase epsilon chain (140 aa).

Belongs to the ATPase epsilon chain family. In terms of assembly, F-type ATPases have 2 components, CF(1) - the catalytic core - and CF(0) - the membrane proton channel. CF(1) has five subunits: alpha(3), beta(3), gamma(1), delta(1), epsilon(1). CF(0) has three main subunits: a, b and c.

It localises to the cell inner membrane. In terms of biological role, produces ATP from ADP in the presence of a proton gradient across the membrane. In Neisseria meningitidis serogroup C / serotype 2a (strain ATCC 700532 / DSM 15464 / FAM18), this protein is ATP synthase epsilon chain.